Reading from the N-terminus, the 439-residue chain is tRNA(Ile)-lysidine synthase (439 aa).

25-30 lines the ATP pocket; that stretch reads SGGLDS.

It belongs to the tRNA(Ile)-lysidine synthase family.

The protein resides in the cytoplasm. It carries out the reaction cytidine(34) in tRNA(Ile2) + L-lysine + ATP = lysidine(34) in tRNA(Ile2) + AMP + diphosphate + H(+). In terms of biological role, ligates lysine onto the cytidine present at position 34 of the AUA codon-specific tRNA(Ile) that contains the anticodon CAU, in an ATP-dependent manner. Cytidine is converted to lysidine, thus changing the amino acid specificity of the tRNA from methionine to isoleucine. This Edwardsiella ictaluri (strain 93-146) protein is tRNA(Ile)-lysidine synthase.